A 293-amino-acid chain; its full sequence is Acetyl-coenzyme A carboxylase carboxyl transferase subunit beta (293 aa).

A CoA carboxyltransferase N-terminal domain is found at 29-293; the sequence is LWVKCPECGQ…GCKAKKAAGK (265 aa). Residues cysteine 33, cysteine 36, cysteine 52, and cysteine 55 each contribute to the Zn(2+) site. The C4-type zinc-finger motif lies at 33–55; sequence CPECGQVVYRKDLHANASVCSNC.

The protein belongs to the AccD/PCCB family. In terms of assembly, acetyl-CoA carboxylase is a heterohexamer composed of biotin carboxyl carrier protein (AccB), biotin carboxylase (AccC) and two subunits each of ACCase subunit alpha (AccA) and ACCase subunit beta (AccD). Zn(2+) is required as a cofactor.

It localises to the cytoplasm. The catalysed reaction is N(6)-carboxybiotinyl-L-lysyl-[protein] + acetyl-CoA = N(6)-biotinyl-L-lysyl-[protein] + malonyl-CoA. It participates in lipid metabolism; malonyl-CoA biosynthesis; malonyl-CoA from acetyl-CoA: step 1/1. In terms of biological role, component of the acetyl coenzyme A carboxylase (ACC) complex. Biotin carboxylase (BC) catalyzes the carboxylation of biotin on its carrier protein (BCCP) and then the CO(2) group is transferred by the transcarboxylase to acetyl-CoA to form malonyl-CoA. The protein is Acetyl-coenzyme A carboxylase carboxyl transferase subunit beta of Prochlorococcus marinus (strain MIT 9303).